Reading from the N-terminus, the 1076-residue chain is Serine/threonine-protein phosphatase 6 regulatory ankyrin repeat subunit C (1076 aa).

ANK repeat units follow at residues 7-36, 40-69, 73-102, 106-135, 139-168, 172-201, 205-234, 238-267, 271-301, 305-334, 338-367, 371-400, 422-451, 455-484, 488-545, 549-579, 584-613, 617-646, 651-680, 687-716, 720-749, 753-782, 790-819, 822-852, 857-886, 890-920, 924-953, and 960-989; these read TDQP…NINV, ERRT…NVNA, LWLT…DVNA, LWQT…SLNV, SGRS…SLNV, KERQ…DLGC, KGYG…EIDE, FGNT…NVNQ, KGFT…DVNY, EGKS…EIDC, FGNT…DTAR, HDMF…LYSI, LGRT…DLRR, FGRT…GVNE, KGCS…DPSL, QGYT…CLED, IPVS…NLDV, KGRT…SALI, RKWT…RADI, YGQT…TADA, RGRT…FVLC, KGRT…STDP, SGYS…FSYL, NPFT…KIVN, KGRT…EVNA, TGRT…DLTV, NKNT…DLGL, and ALQM…TVLA. A compositionally biased stretch (basic and acidic residues) spans 502–514; that stretch reads YRRAEPHTPSSHD. Residues 502-522 are disordered; sequence YRRAEPHTPSSHDAEEDEPLK. Phosphoserine occurs at positions 1028 and 1075.

In terms of assembly, protein phosphatase 6 (PP6) holoenzyme is proposed to be a heterotrimeric complex formed by the catalytic subunit, a SAPS domain-containing subunit (PP6R) and an ankyrin repeat-domain containing regulatory subunit (ARS). Interacts with PPP6R1.

Functionally, putative regulatory subunit of protein phosphatase 6 (PP6) that may be involved in the recognition of phosphoprotein substrates. The polypeptide is Serine/threonine-protein phosphatase 6 regulatory ankyrin repeat subunit C (ANKRD52) (Homo sapiens (Human)).